Consider the following 314-residue polypeptide: MTHTPVLLKEMLSLLSPQDGGIYVDATFGAGGYSKAILESADCKVYAIDRDETVTKFYDDLSVRYPDRIKLFIEKFSNIKSILSSVEPSPVIPVLDTGKNNWSRAGMTSNGVDGVVFDIGVSSMQLDNGDRGFSFLHDGPLDMSMDNSSYINASTFVNALREEEIANTIYNYGGERHSRKIARAIINARKKKTIKTTFELADIVRSVVFRGKSKIDPATRTFQAIRIWVNDELEELEKGIKAASEILSENGKLIVVTFHSLEDRIVKTFFKDLCATDCKTFSLLNKKVIEASIEEVSANPRSRSAKLRAIQRLS.

S-adenosyl-L-methionine contacts are provided by residues 31 to 33 (GGY), D49, F76, D118, and Q125.

This sequence belongs to the methyltransferase superfamily. RsmH family.

It localises to the cytoplasm. The catalysed reaction is cytidine(1402) in 16S rRNA + S-adenosyl-L-methionine = N(4)-methylcytidine(1402) in 16S rRNA + S-adenosyl-L-homocysteine + H(+). Its function is as follows. Specifically methylates the N4 position of cytidine in position 1402 (C1402) of 16S rRNA. This chain is Ribosomal RNA small subunit methyltransferase H, found in Wolbachia pipientis wMel.